The following is a 159-amino-acid chain: Pupal cuticle protein Edg-91 (159 aa).

The first 21 residues, 1–21 (MALVRVSCMLALLLIAGQGQA), serve as a signal peptide directing secretion.

As to expression, larval (posterior) and imaginal (anterior) epidermis.

In terms of biological role, component of the pupal cuticle. This chain is Pupal cuticle protein Edg-91 (Edg91), found in Drosophila melanogaster (Fruit fly).